Reading from the N-terminus, the 135-residue chain is uncharacterized protein (135 aa).

The segment at 1 to 36 (MSHAEKPMSDSVNHHHHRTFEVLTAEPVRSRRKPRH) is disordered.

The protein belongs to the transposase 8 family.

This is an uncharacterized protein from Sinorhizobium fredii (strain NBRC 101917 / NGR234).